Consider the following 1029-residue polypeptide: FYVE, RhoGEF and PH domain-containing protein tag-77 (1029 aa).

2 stretches are compositionally biased toward basic and acidic residues: residues 1–12 (MKYDMNHRKNSD) and 20–39 (TVKEMMAEFQNKLDDGDNRF). 3 disordered regions span residues 1–155 (MKYD…ATSE), 185–254 (VPRM…ERKT), and 279–370 (NNGV…EKDD). The span at 42 to 56 (QPPPPPSPRRAPPPP) shows a compositional bias: pro residues. 2 stretches are compositionally biased toward low complexity: residues 76-85 (PPSSSESSEN) and 122-133 (SSSTSDVSSQNS). Polar residues-rich tracts occupy residues 141–155 (SCTTPTILVSPATSE) and 200–211 (PISQVSTLSQVS). A compositionally biased stretch (acidic residues) spans 212–227 (DEFDEGDTSASDEESM). Low complexity predominate over residues 316 to 334 (SPTSGMSSSSTDDFSRITS). Polar residues predominate over residues 335 to 347 (MTSDRSSILTSHS). The region spanning 375-572 (KLHYAAVEFL…ENVTQAVNQK (198 aa)) is the DH domain. The 104-residue stretch at 593–696 (NVLEPGRVLI…WTDDLTKAQY (104 aa)) folds into the PH domain. Zn(2+)-binding residues include C810, C823, C826, C831, C834, C851, and C854. The FYVE-type; degenerate zinc-finger motif lies at 810–859 (CSTEFNIINRRHHCRDCGWLICKFCKGQAPLSKYDFTKQNVCSECFDRHY).

The protein resides in the cytoplasm. The protein localises to the cytoskeleton. Its function is as follows. Activates cdc-42, a member of the Ras-like family of Rho- and Rac proteins, by exchanging bound GDP for free GTP. May play a role in regulating the actin cytoskeleton and cell shape. Required for normal lifespan. The polypeptide is FYVE, RhoGEF and PH domain-containing protein tag-77 (Caenorhabditis elegans).